A 1073-amino-acid polypeptide reads, in one-letter code: ATP-dependent helicase/deoxyribonuclease subunit B (1073 aa).

Belongs to the helicase family. AddB/RexB type 2 subfamily. In terms of assembly, heterodimer of AddA and RexB. Mg(2+) serves as cofactor.

In terms of biological role, the heterodimer acts as both an ATP-dependent DNA helicase and an ATP-dependent, dual-direction single-stranded exonuclease. Recognizes the chi site generating a DNA molecule suitable for the initiation of homologous recombination. This subunit has 5' -&gt; 3' nuclease activity but not helicase activity. The protein is ATP-dependent helicase/deoxyribonuclease subunit B of Streptococcus equi subsp. zooepidemicus (strain H70).